We begin with the raw amino-acid sequence, 202 residues long: Small ribosomal subunit protein uS4c (202 aa).

The region spanning 90 to 154 (MRLDNIIFRL…SQSIITKNLN (65 aa)) is the S4 RNA-binding domain.

The protein belongs to the universal ribosomal protein uS4 family. In terms of assembly, part of the 30S ribosomal subunit. Contacts protein S5. The interaction surface between S4 and S5 is involved in control of translational fidelity.

The protein resides in the plastid. It localises to the chloroplast. Functionally, one of the primary rRNA binding proteins, it binds directly to 16S rRNA where it nucleates assembly of the body of the 30S subunit. Its function is as follows. With S5 and S12 plays an important role in translational accuracy. In Ricciocarpos natans (Liverwort), this protein is Small ribosomal subunit protein uS4c (rps4).